A 380-amino-acid chain; its full sequence is Protein Wnt-5a (380 aa).

Residues 1–35 form the signal peptide; it reads MKKSIGILSPGVALGTAGSAMSSKFFVMALAVFFS. Residues 36-61 constitute a propeptide that is removed on maturation; it reads FAQVVIEANSWWSLGMNNPVQMSEVY. Cysteine 104 and cysteine 115 are joined by a disulfide. Asparagine 114 and asparagine 120 each carry an N-linked (GlcNAc...) asparagine glycan. 10 disulfides stabilise this stretch: cysteine 154–cysteine 162, cysteine 164–cysteine 182, cysteine 238–cysteine 252, cysteine 240–cysteine 247, cysteine 309–cysteine 340, cysteine 325–cysteine 335, cysteine 339–cysteine 379, cysteine 355–cysteine 370, cysteine 357–cysteine 367, and cysteine 362–cysteine 363. Serine 244 is lipidated: O-palmitoleoyl serine; by PORCN. N-linked (GlcNAc...) asparagine glycosylation is found at asparagine 312 and asparagine 326.

The protein belongs to the Wnt family. As to quaternary structure, forms a soluble 1:1 complex with AFM; this prevents oligomerization and is required for prolonged biological activity. The complex with AFM may represent the physiological form in body fluids. Homooligomer; disulfide-linked, leading to inactivation (in vitro). Interacts with PORCN. Interacts with WLS. Interacts with glypican GCP3. Interacts with PKD1 (via extracellular domain). Interacts with TMEM67. In terms of processing, glycosylation is necessary for secretion but not for activity. Palmitoleoylation is required for efficient binding to frizzled receptors. Depalmitoleoylation leads to Wnt signaling pathway inhibition. Post-translationally, proteolytic processing by TIKI1 and TIKI2 promotes oxidation and formation of large disulfide-bond oligomers, leading to inactivation of WNT5A.

It is found in the secreted. The protein resides in the extracellular space. It localises to the extracellular matrix. Its function is as follows. Ligand for members of the frizzled family of seven transmembrane receptors. Can activate or inhibit canonical Wnt signaling, depending on receptor context. In the presence of FZD4, activates beta-catenin signaling. In the presence of ROR2, inhibits the canonical Wnt pathway by promoting beta-catenin degradation through a GSK3-independent pathway which involves down-regulation of beta-catenin-induced reporter gene expression. Suppression of the canonical pathway allows chondrogenesis to occur. Inhibits tumor formation. Stimulates cell migration. Decreases proliferation, migration, invasiveness and clonogenicity of carcinoma cells and may act as a tumor suppressor. Mediates motility of melanoma cells. Required during embryogenesis for extension of the primary anterior-posterior axis and for outgrowth of limbs and the genital tubercle. Inhibits type II collagen expression in chondrocytes. The protein is Protein Wnt-5a of Oryctolagus cuniculus (Rabbit).